The chain runs to 432 residues: Cyclic di-GMP phosphodiesterase CdgJ (432 aa).

One can recognise an EAL domain in the interval 1–232 (MVRCLWAAEC…QRYVSPEHVI (232 aa)). Residues 226–413 (VSPEHVIAMQ…CLELGFDLED (188 aa)) form the HDOD domain.

It carries out the reaction 3',3'-c-di-GMP + H2O = 5'-phosphoguanylyl(3'-&gt;5')guanosine + H(+). Its function is as follows. Phosphodiesterase (PDE) that catalyzes the hydrolysis of cyclic diguanylate (c-di-GMP). Positively regulates motility and negatively regulates biofilm formation. The polypeptide is Cyclic di-GMP phosphodiesterase CdgJ (Vibrio cholerae serotype O1 (strain ATCC 39315 / El Tor Inaba N16961)).